A 757-amino-acid polypeptide reads, in one-letter code: LPS-assembly protein LptD (757 aa).

A signal peptide spans 1 to 21 (MRRLIPIAITGSLLWGAAVQA).

It belongs to the LptD family. In terms of assembly, component of the lipopolysaccharide transport and assembly complex. Interacts with LptE and LptA.

It localises to the cell outer membrane. In terms of biological role, together with LptE, is involved in the assembly of lipopolysaccharide (LPS) at the surface of the outer membrane. The sequence is that of LPS-assembly protein LptD from Alkalilimnicola ehrlichii (strain ATCC BAA-1101 / DSM 17681 / MLHE-1).